A 349-amino-acid chain; its full sequence is Hydroxymethylglutaryl-CoA synthase (349 aa).

Aspartate 29 lines the (3S)-3-hydroxy-3-methylglutaryl-CoA pocket. The Proton donor/acceptor role is filled by glutamate 81. (3S)-3-hydroxy-3-methylglutaryl-CoA-binding residues include cysteine 113, serine 154, threonine 202, and histidine 235. Cysteine 113 functions as the Acyl-thioester intermediate in the catalytic mechanism. Residue histidine 235 is the Proton donor/acceptor of the active site. Arginine 240 contacts CoA. (3S)-3-hydroxy-3-methylglutaryl-CoA-binding residues include arginine 244, asparagine 267, and serine 297.

This sequence belongs to the thiolase-like superfamily. Archaeal HMG-CoA synthase family. As to quaternary structure, interacts with acetoacetyl-CoA thiolase that catalyzes the precedent step in the pathway and with a DUF35 protein. The acetoacetyl-CoA thiolase/HMG-CoA synthase complex channels the intermediate via a fused CoA-binding site, which allows for efficient coupling of the endergonic thiolase reaction with the exergonic HMGCS reaction.

The catalysed reaction is acetoacetyl-CoA + acetyl-CoA + H2O = (3S)-3-hydroxy-3-methylglutaryl-CoA + CoA + H(+). Its pathway is metabolic intermediate biosynthesis; (R)-mevalonate biosynthesis; (R)-mevalonate from acetyl-CoA: step 2/3. Catalyzes the condensation of acetyl-CoA with acetoacetyl-CoA to form 3-hydroxy-3-methylglutaryl-CoA (HMG-CoA). Functions in the mevalonate (MVA) pathway leading to isopentenyl diphosphate (IPP), a key precursor for the biosynthesis of isoprenoid compounds that are building blocks of archaeal membrane lipids. The protein is Hydroxymethylglutaryl-CoA synthase of Pyrobaculum arsenaticum (strain DSM 13514 / JCM 11321 / PZ6).